Consider the following 224-residue polypeptide: UPF0758 protein ABO_0214 (224 aa).

One can recognise an MPN domain in the interval proline 102 to valine 224. Zn(2+) is bound by residues histidine 173, histidine 175, and aspartate 186. The short motif at histidine 173–aspartate 186 is the JAMM motif element.

This sequence belongs to the UPF0758 family.

This chain is UPF0758 protein ABO_0214, found in Alcanivorax borkumensis (strain ATCC 700651 / DSM 11573 / NCIMB 13689 / SK2).